Here is a 97-residue protein sequence, read N- to C-terminus: MSQNATVNVDIKLGVNKFHVDEGHPHIILAENPDINEFHKLMKACPAGLYKQDDAGNIHFDSAGCLECGTCRVLCGNTILEQWQYPAGTFGIDFRYG.

Belongs to the bacterial-type ferredoxin family. FixX subfamily.

Its function is as follows. Could be a 3Fe-4S cluster-containing protein. Probably participates in a redox process with YdiQ, YdiR and YdiS. This Escherichia coli (strain K12) protein is Ferredoxin-like protein YdiT (ydiT).